Reading from the N-terminus, the 467-residue chain is Zinc finger and BTB domain-containing protein 43 (467 aa).

Methionine 1 is modified (N-acetylmethionine). Residues cysteine 33 to alanine 97 form the BTB domain. Disordered stretches follow at residues leucine 134–glutamate 153 and histidine 162–phenylalanine 225. 2 stretches are compositionally biased toward basic and acidic residues: residues aspartate 164–glycine 174 and lysine 182–tyrosine 194. Residues lysine 182, lysine 241, lysine 247, lysine 297, and lysine 358 each participate in a glycyl lysine isopeptide (Lys-Gly) (interchain with G-Cter in SUMO2) cross-link. Residues tyrosine 373–histidine 394 form a C2H2-type 1; atypical zinc finger. The C2H2-type 2 zinc-finger motif lies at tyrosine 400–histidine 422. Threonine 423 carries the phosphothreonine modification. Residues tyrosine 428 to cysteine 450 form a C2H2-type 3; atypical zinc finger. Residue lysine 458 forms a Glycyl lysine isopeptide (Lys-Gly) (interchain with G-Cter in SUMO2) linkage.

Belongs to the krueppel C2H2-type zinc-finger protein family. In terms of assembly, interacts with BDP1.

It is found in the nucleus. Functionally, may be involved in transcriptional regulation. This Homo sapiens (Human) protein is Zinc finger and BTB domain-containing protein 43 (ZBTB43).